Consider the following 202-residue polypeptide: Na(+)-translocating NADH-quinone reductase subunit E (202 aa).

6 helical membrane passes run 11 to 31 (AVFVENMALAFFLGMCTFIAI), 35 to 55 (VETAIGLGVAVIVVLGITMPV), 79 to 99 (LSFLGLLTFIGVIAALVQILE), 114 to 134 (GVFLPLITVNCAIMGGSLFMV), 144 to 164 (TVYGIGAGVSWALAIAALAGI), and 180 to 200 (LGITFITIGLMSLGFMSFSGV).

The protein belongs to the NqrDE/RnfAE family. Composed of six subunits; NqrA, NqrB, NqrC, NqrD, NqrE and NqrF.

The protein resides in the cell inner membrane. It catalyses the reaction a ubiquinone + n Na(+)(in) + NADH + H(+) = a ubiquinol + n Na(+)(out) + NAD(+). NQR complex catalyzes the reduction of ubiquinone-1 to ubiquinol by two successive reactions, coupled with the transport of Na(+) ions from the cytoplasm to the periplasm. NqrA to NqrE are probably involved in the second step, the conversion of ubisemiquinone to ubiquinol. In Ectopseudomonas mendocina (strain ymp) (Pseudomonas mendocina), this protein is Na(+)-translocating NADH-quinone reductase subunit E.